Here is a 257-residue protein sequence, read N- to C-terminus: 5-oxoprolinase subunit A (257 aa).

Belongs to the LamB/PxpA family. As to quaternary structure, forms a complex composed of PxpA, PxpB and PxpC.

It carries out the reaction 5-oxo-L-proline + ATP + 2 H2O = L-glutamate + ADP + phosphate + H(+). Functionally, catalyzes the cleavage of 5-oxoproline to form L-glutamate coupled to the hydrolysis of ATP to ADP and inorganic phosphate. This chain is 5-oxoprolinase subunit A, found in Oceanobacillus iheyensis (strain DSM 14371 / CIP 107618 / JCM 11309 / KCTC 3954 / HTE831).